Here is a 404-residue protein sequence, read N- to C-terminus: Cysteine desulfurase IscS (404 aa).

Pyridoxal 5'-phosphate contacts are provided by residues 75–76 (AT), N155, Q183, and 203–205 (SAH). K206 bears the N6-(pyridoxal phosphate)lysine mark. Position 243 (T243) interacts with pyridoxal 5'-phosphate. Residue C328 is the Cysteine persulfide intermediate of the active site. C328 provides a ligand contact to [2Fe-2S] cluster.

It belongs to the class-V pyridoxal-phosphate-dependent aminotransferase family. NifS/IscS subfamily. In terms of assembly, homodimer. Forms a heterotetramer with IscU, interacts with other sulfur acceptors. Pyridoxal 5'-phosphate is required as a cofactor.

Its subcellular location is the cytoplasm. The enzyme catalyses (sulfur carrier)-H + L-cysteine = (sulfur carrier)-SH + L-alanine. It functions in the pathway cofactor biosynthesis; iron-sulfur cluster biosynthesis. In terms of biological role, master enzyme that delivers sulfur to a number of partners involved in Fe-S cluster assembly, tRNA modification or cofactor biosynthesis. Catalyzes the removal of elemental sulfur atoms from cysteine to produce alanine. Functions as a sulfur delivery protein for Fe-S cluster synthesis onto IscU, an Fe-S scaffold assembly protein, as well as other S acceptor proteins. This chain is Cysteine desulfurase IscS, found in Vibrio vulnificus (strain CMCP6).